A 472-amino-acid polypeptide reads, in one-letter code: L-fuculokinase (472 aa).

The protein belongs to the FGGY kinase family. The cofactor is a divalent metal cation.

It carries out the reaction L-fuculose + ATP = L-fuculose 1-phosphate + ADP + H(+). The protein operates within carbohydrate degradation; L-fucose degradation; L-lactaldehyde and glycerone phosphate from L-fucose: step 2/3. Catalyzes the phosphorylation of L-fuculose. Can also phosphorylate, with lower efficiency, D-ribulose, D-xylulose and D-fructose. The sequence is that of L-fuculokinase from Escherichia coli (strain K12).